The following is a 548-amino-acid chain: Serine/threonine-protein phosphatase 2A 56 kDa regulatory subunit delta 1 isoform (548 aa).

Basic residues predominate over residues 1–10 (MKGIKSKMLS). The interval 1–75 (MKGIKSKMLS…KKVPIDTTPT (75 aa)) is disordered. Residues 27–39 (KKSNSHDSSKAPK) are compositionally biased toward basic and acidic residues. Y96 carries the phosphotyrosine modification. Phosphoserine occurs at positions 99, 109, and 542.

This sequence belongs to the phosphatase 2A regulatory subunit B family. In terms of assembly, PP2A consists of a common heterodimeric core enzyme, composed of a 36 kDa catalytic subunit (subunit C) and a 65 kDa constant regulatory subunit (PR65 or subunit A), that associates with a variety of regulatory subunits. Proteins that associate with the core dimer include three families of regulatory subunits B (the R2/B/PR55/B55, R3/B''/PR72/PR130/PR59 and R5/B'/B56 families), the 48 kDa variable regulatory subunit, viral proteins, and cell signaling molecules.

The protein resides in the cytoplasm. It is found in the nucleus. Functionally, the B regulatory subunit might modulate substrate selectivity and catalytic activity, and might also direct the localization of the catalytic enzyme to a particular subcellular compartment. Has a role in cell shape control and septum formation. The polypeptide is Serine/threonine-protein phosphatase 2A 56 kDa regulatory subunit delta 1 isoform (par1) (Schizosaccharomyces pombe (strain 972 / ATCC 24843) (Fission yeast)).